Reading from the N-terminus, the 398-residue chain is Acetate kinase (398 aa).

Asparagine 8 provides a ligand contact to Mg(2+). ATP is bound at residue lysine 15. Arginine 89 contributes to the substrate binding site. The active-site Proton donor/acceptor is aspartate 146. ATP-binding positions include histidine 206–glycine 210, aspartate 283–arginine 285, and glycine 331–asparagine 335. Residue glutamate 383 participates in Mg(2+) binding.

Belongs to the acetokinase family. As to quaternary structure, homodimer. It depends on Mg(2+) as a cofactor. The cofactor is Mn(2+).

The protein resides in the cytoplasm. It carries out the reaction acetate + ATP = acetyl phosphate + ADP. It functions in the pathway metabolic intermediate biosynthesis; acetyl-CoA biosynthesis; acetyl-CoA from acetate: step 1/2. In terms of biological role, catalyzes the formation of acetyl phosphate from acetate and ATP. Can also catalyze the reverse reaction. The chain is Acetate kinase from Streptococcus pyogenes serotype M28 (strain MGAS6180).